The following is a 462-amino-acid chain: PTS system mannitol-specific cryptic EIICB component (462 aa).

The Cytoplasmic segment spans residues 1 to 24 (MENKSARAKVQAFGGFLTAMVIPN). Residues 13–344 (FGGFLTAMVI…LKMEKTVETE (332 aa)) enclose the PTS EIIC type-2 domain. Residues 25 to 46 (IGAFIAWGFITALFIPTGWLPN) traverse the membrane as a helical segment. At 47–50 (EHFA) the chain is on the periplasmic side. A helical membrane pass occupies residues 51-71 (KIVGPMITYLLPVMIGSTGGH). At 72-134 (LVGGKRGAVM…AGFEMVINNF (63 aa)) the chain is on the cytoplasmic side. Residues 135-156 (SLGIAGMLLCLLGFEVIGPAVL) form a helical membrane-spanning segment. Over 157 to 165 (IANTFVKEC) the chain is Periplasmic. A helical membrane pass occupies residues 166-186 (IEALVHAGYLPLLSVINEPAK). Topologically, residues 187-273 (VLFLNNAIDQ…VLMKPLTIIA (87 aa)) are cytoplasmic. Residues 274-293 (MIAGGMSGTWMFNLLDGGLV) form a helical membrane-spanning segment. Over 294 to 313 (AGPSPGSIFAYLALTPKGSF) the chain is Periplasmic. Residues 314–335 (LATIAGVTVGTLVSFAITSLIL) traverse the membrane as a helical segment. At 336–462 (KMEKTVETES…FNQLTAEHKH (127 aa)) the chain is on the cytoplasmic side. The PTS EIIB type-2 domain maps to 371–461 (KRIAFVCDAG…LFNQLTAEHK (91 aa)). Cysteine 377 serves as the catalytic Phosphocysteine intermediate; for EIIB activity. Residue cysteine 377 is modified to Phosphocysteine; by EIIA.

Its subcellular location is the cell inner membrane. It catalyses the reaction D-mannitol(out) + N(pros)-phospho-L-histidyl-[protein] = D-mannitol 1-phosphate(in) + L-histidyl-[protein]. The phosphoenolpyruvate-dependent sugar phosphotransferase system (sugar PTS), a major carbohydrate active transport system, catalyzes the phosphorylation of incoming sugar substrates concomitantly with their translocation across the cell membrane. The enzyme II CmtAB PTS system is involved in D-mannitol transport. This chain is PTS system mannitol-specific cryptic EIICB component (cmtA), found in Escherichia coli O157:H7.